The following is a 276-amino-acid chain: 4-chlorobenzoyl coenzyme A dehalogenase-2 (276 aa).

A substrate-binding site is contributed by 66-71; it reads AGFDLE. Residue H93 is the Proton acceptor of the active site. A substrate-binding site is contributed by G117. D148 serves as the catalytic Nucleophile. Residue R261 coordinates substrate.

It belongs to the enoyl-CoA hydratase/isomerase family. As to quaternary structure, homotetramer.

It carries out the reaction 4-chlorobenzoyl-CoA + H2O = 4-hydroxybenzoyl-CoA + chloride + H(+). Its pathway is xenobiotic degradation; 4-chlorobenzoate degradation; 4-hydroxybenzoate from 4-chlorobenzoate: step 2/3. Its function is as follows. Dehalogenates 4-chlorobenzoyl-CoA, 4-iodobenzoyl-CoA, 4-bromobenzoyl-CoA and, at a slower rate, 4-fluorobenzoyl-CoA. Does not dehalogenate 2-chlorobenzoyl-CoA or 3-chlorobenzoyl-CoA. This Arthrobacter sp protein is 4-chlorobenzoyl coenzyme A dehalogenase-2.